The chain runs to 403 residues: NADH-quinone oxidoreductase subunit D (403 aa).

This sequence belongs to the complex I 49 kDa subunit family. As to quaternary structure, NDH-1 is composed of 15 different subunits. Subunits NuoB, C, D, E, F, and G constitute the peripheral sector of the complex.

It is found in the cell membrane. It catalyses the reaction a quinone + NADH + 5 H(+)(in) = a quinol + NAD(+) + 4 H(+)(out). NDH-1 shuttles electrons from NADH, via FMN and iron-sulfur (Fe-S) centers, to quinones in the respiratory chain. The immediate electron acceptor for the enzyme in this species is believed to be a menaquinone. Couples the redox reaction to proton translocation (for every two electrons transferred, four hydrogen ions are translocated across the cytoplasmic membrane), and thus conserves the redox energy in a proton gradient. This chain is NADH-quinone oxidoreductase subunit D, found in Deinococcus geothermalis (strain DSM 11300 / CIP 105573 / AG-3a).